Consider the following 296-residue polypeptide: Myeloid differentiation primary response protein MyD88 (296 aa).

In terms of domain architecture, Death spans 54 to 109 (MDFEYLEIRQLETQADPTGRLLDAWQGRPGASVGRLLELLTKLGRDDVLLELGPSI). An intermediate domain region spans residues 110-155 (EEDCQKYILKQQQEEAEKPLQVAAVDSSVPRTAELAGITTLDDPLG). One can recognise a TIR domain in the interval 159-293 (ERFDAFICYC…WFWTRLAKAL (135 aa)). Serine 244 is subject to Phosphoserine.

As to quaternary structure, homodimer. Also forms heterodimers with TIRAP. Binds to TLR2, TLR5, IRAK1, IRAK2 and IRAK4 via their respective TIR domains. Interacts with IL18R1. Interacts with BMX, IL1RL1, IKBKE and IRF7. Interacts with LRRFIP1 and LRRFIP2; this interaction positively regulates Toll-like receptor (TLR) signaling in response to agonist. Interacts with FLII. LRRFIP1 and LRRFIP2 compete with FLII for MYD88-binding. Interacts with IRF1. Upon IL1B treatment, forms a complex with PELI1, IRAK1, IRAK4 and TRAF6; this complex recruits MAP3K7/TAK1, TAB1 and TAB2 to mediate NF-kappa-B activation. Direct binding of SMAD6 to PELI1 prevents the complex formation and hence negatively regulates IL1R-TLR signaling and eventually NF-kappa-B-mediated gene expression. May interact with PIK3AP1. Interacts (via TIR domain) with DHX9 (via H2A and OB-fold regions); this interaction is direct. Interacts with OTUD4 deubiquitinase; the interaction is direct. Interacts with TLR4. In terms of assembly, (Microbial infection) In case of infection, interacts with uropathogenic E.coli protein TcpC; suppressing Toll-like receptor (TLR)-mediated cytokine production. (Microbial infection) In case of infection, interacts with uropathogenic E.faecalis protein TcpF; suppressing Toll-like receptor (TLR)-mediated cytokine production. As to quaternary structure, (Microbial infection) In case of infection, interacts with B.melitensis protein TcpB. In terms of assembly, (Microbial infection) Interacts with human metapneumovirus protein M2-2; this interaction prevents MYD88-mediated cytokine secretion. In terms of processing, ubiquitinated; undergoes 'Lys-63'-linked polyubiquitination. OTUD4 specifically hydrolyzes 'Lys-63'-linked polyubiquitinated MYD88. Deubiquitinated by USP3 that cleaves 'Lys-63'-linked ubiquitin chains leading to inhibition of MYD88-induced NF-kappa-B signaling. Post-translationally, (Microbial infection) Ubiquitinated by human herpesvirus 8 (KSHV) protein RTA/ORF50, leading to proteasomal degradation ans suppression of TLR4 signaling pathway. Ubiquitous.

It localises to the cytoplasm. It is found in the nucleus. Its function is as follows. Adapter protein involved in the Toll-like receptor and IL-1 receptor signaling pathway in the innate immune response. Acts via IRAK1, IRAK2, IRF7 and TRAF6, leading to NF-kappa-B activation, cytokine secretion and the inflammatory response. Increases IL-8 transcription. Involved in IL-18-mediated signaling pathway. Activates IRF1 resulting in its rapid migration into the nucleus to mediate an efficient induction of IFN-beta, NOS2/INOS, and IL12A genes. Upon TLR8 activation by GU-rich single-stranded RNA (GU-rich RNA) derived from viruses such as SARS-CoV-2, SARS-CoV and HIV-1, induces IL1B release through NLRP3 inflammasome activation. MyD88-mediated signaling in intestinal epithelial cells is crucial for maintenance of gut homeostasis and controls the expression of the antimicrobial lectin REG3G in the small intestine. This Homo sapiens (Human) protein is Myeloid differentiation primary response protein MyD88.